A 904-amino-acid chain; its full sequence is Exo-beta-D-glucosaminidase (904 aa).

The signal sequence occupies residues M1–A32. Positions A28 to G49 are disordered. Residue D476 is the Proton donor of the active site. E545 functions as the Nucleophile in the catalytic mechanism. Positions S813 to V828 are enriched in low complexity. Positions S813–S833 are disordered.

It belongs to the glycosyl hydrolase 2 family. Monomer.

Its subcellular location is the secreted. It catalyses the reaction Hydrolysis of chitosan or chitosan oligosaccharides to remove successive D-glucosamine residues from the non-reducing termini.. Its function is as follows. Hydrolyzes chitosan and chitooligosaccharides with retention of anomeric configuration. Has no beta-mannosidase activity. The sequence is that of Exo-beta-D-glucosaminidase from Streptomyces avermitilis (strain ATCC 31267 / DSM 46492 / JCM 5070 / NBRC 14893 / NCIMB 12804 / NRRL 8165 / MA-4680).